The primary structure comprises 479 residues: Adenosylhomocysteinase (479 aa).

Residues T66, D142, and E203 each coordinate substrate. NAD(+) is bound at residue 204 to 206; it reads TTT. Residues K233 and D237 each contribute to the substrate site. Residues N238, 267 to 272, E290, N325, 346 to 348, and N394 each bind NAD(+); these read GYGDVG and IGH.

Belongs to the adenosylhomocysteinase family. Requires NAD(+) as cofactor.

Its subcellular location is the cytoplasm. It carries out the reaction S-adenosyl-L-homocysteine + H2O = L-homocysteine + adenosine. It participates in amino-acid biosynthesis; L-homocysteine biosynthesis; L-homocysteine from S-adenosyl-L-homocysteine: step 1/1. May play a key role in the regulation of the intracellular concentration of adenosylhomocysteine. This chain is Adenosylhomocysteinase, found in Nitratidesulfovibrio vulgaris (strain DSM 19637 / Miyazaki F) (Desulfovibrio vulgaris).